The primary structure comprises 471 residues: Serine/threonine-protein kinase AtPK2/AtPK19 (471 aa).

Residues 1–21 (MVSSQCSVANKNQTGKPFQKH) form a disordered region. Positions 140-395 (FEVLKVVGQG…AEEIKKHKWF (256 aa)) constitute a Protein kinase domain. ATP is bound by residues 146–154 (VGQGAFGKV) and Lys169. Asp263 (proton acceptor) is an active-site residue. Residues 281 to 307 (DFGLAKEFEENTRSNSMCGTTEYMAPE) form an activation loop region. Ser296 carries the post-translational modification Phosphoserine; by PDPK1. Residues 396-466 (KAINWKKLEA…VRPPHSFLHR (71 aa)) form the AGC-kinase C-terminal domain. Residue Thr455 is modified to Phosphothreonine; by TOR.

It belongs to the protein kinase superfamily. AGC Ser/Thr protein kinase family. S6 kinase subfamily. Interacts with TAP46. Binds to MRF1. Post-translationally, undergoes serine-specific autophosphorylation. Phosphorylated at Thr-455 by TOR.

The enzyme catalyses L-seryl-[protein] + ATP = O-phospho-L-seryl-[protein] + ADP + H(+). The catalysed reaction is L-threonyl-[protein] + ATP = O-phospho-L-threonyl-[protein] + ADP + H(+). With respect to regulation, activated by PDK1. In terms of biological role, downstream effector of TOR signaling pathway. May be involved in adaptation of plant to cold or high-salt conditions. Mediates the phosphorylation of MRFs (e.g. MRF1). The chain is Serine/threonine-protein kinase AtPK2/AtPK19 (ATPK2) from Arabidopsis thaliana (Mouse-ear cress).